We begin with the raw amino-acid sequence, 475 residues long: Ribulose bisphosphate carboxylase large chain (475 aa).

The propeptide occupies 1-2; sequence MV. Pro-3 bears the N-acetylproline mark. At Lys-14 the chain carries N6,N6,N6-trimethyllysine. Substrate-binding residues include Asn-123 and Thr-173. The active-site Proton acceptor is the Lys-175. Lys-177 lines the substrate pocket. Mg(2+) contacts are provided by Lys-201, Asp-203, and Glu-204. Lys-201 carries the post-translational modification N6-carboxylysine. The active-site Proton acceptor is the His-294. Substrate-binding residues include Arg-295, His-327, and Ser-379.

It belongs to the RuBisCO large chain family. Type I subfamily. In terms of assembly, heterohexadecamer of 8 large chains and 8 small chains. It depends on Mg(2+) as a cofactor.

It localises to the plastid. The protein localises to the chloroplast. It carries out the reaction 2 (2R)-3-phosphoglycerate + 2 H(+) = D-ribulose 1,5-bisphosphate + CO2 + H2O. The catalysed reaction is D-ribulose 1,5-bisphosphate + O2 = 2-phosphoglycolate + (2R)-3-phosphoglycerate + 2 H(+). Its function is as follows. RuBisCO catalyzes two reactions: the carboxylation of D-ribulose 1,5-bisphosphate, the primary event in carbon dioxide fixation, as well as the oxidative fragmentation of the pentose substrate in the photorespiration process. Both reactions occur simultaneously and in competition at the same active site. The sequence is that of Ribulose bisphosphate carboxylase large chain from Dunaliella tertiolecta (Green alga).